A 466-amino-acid polypeptide reads, in one-letter code: Paraneoplastic antigen Ma3 homolog (466 aa).

Residues arginine 379–threonine 408 form a disordered region. A compositionally biased stretch (basic residues) spans serine 384 to glycine 399. A CCHC-type zinc finger spans residues threonine 415 to asparagine 432. Positions glutamine 441 to lysine 466 are disordered. Basic and acidic residues predominate over residues alanine 445–histidine 460.

This sequence belongs to the PNMA family. In terms of tissue distribution, expressed in the cerebrum and cerebellum.

It is found in the nucleus. It localises to the nucleolus. This chain is Paraneoplastic antigen Ma3 homolog (Pnma3), found in Mus musculus (Mouse).